The chain runs to 341 residues: Protein-glutamate methylesterase/protein-glutamine glutaminase 2 (341 aa).

The 114-residue stretch at 7-120 folds into the Response regulatory domain; that stretch reads KTLIVDDSLL…NRDLDSFFSE (114 aa). D58 bears the 4-aspartylphosphate mark. In terms of domain architecture, CheB-type methylesterase spans 155–341; it reads VIAIGASTGG…QALYKLINQL (187 aa). Catalysis depends on residues S161, H187, and D283.

Belongs to the CheB family. Phosphorylated by CheA. Phosphorylation of the N-terminal regulatory domain activates the methylesterase activity.

The protein localises to the cytoplasm. It carries out the reaction [protein]-L-glutamate 5-O-methyl ester + H2O = L-glutamyl-[protein] + methanol + H(+). The catalysed reaction is L-glutaminyl-[protein] + H2O = L-glutamyl-[protein] + NH4(+). Its function is as follows. Involved in chemotaxis. Part of a chemotaxis signal transduction system that modulates chemotaxis in response to various stimuli. Catalyzes the demethylation of specific methylglutamate residues introduced into the chemoreceptors (methyl-accepting chemotaxis proteins or MCP) by CheR. Also mediates the irreversible deamidation of specific glutamine residues to glutamic acid. The chain is Protein-glutamate methylesterase/protein-glutamine glutaminase 2 from Syntrophomonas wolfei subsp. wolfei (strain DSM 2245B / Goettingen).